Here is a 352-residue protein sequence, read N- to C-terminus: Anthranilate phosphoribosyltransferase (352 aa).

5-phospho-alpha-D-ribose 1-diphosphate-binding positions include Gly94, 97 to 98, Ser102, 104 to 107, 122 to 130, and Ser134; these read GS, NIST, and KHGNRAVSS. Residue Gly94 coordinates anthranilate. Residue Ser106 participates in Mg(2+) binding. Asn125 contacts anthranilate. Anthranilate is bound at residue Arg180. 2 residues coordinate Mg(2+): Asp239 and Glu240.

Belongs to the anthranilate phosphoribosyltransferase family. As to quaternary structure, homodimer. Mg(2+) serves as cofactor.

It catalyses the reaction N-(5-phospho-beta-D-ribosyl)anthranilate + diphosphate = 5-phospho-alpha-D-ribose 1-diphosphate + anthranilate. It functions in the pathway amino-acid biosynthesis; L-tryptophan biosynthesis; L-tryptophan from chorismate: step 2/5. Its function is as follows. Catalyzes the transfer of the phosphoribosyl group of 5-phosphorylribose-1-pyrophosphate (PRPP) to anthranilate to yield N-(5'-phosphoribosyl)-anthranilate (PRA). The sequence is that of Anthranilate phosphoribosyltransferase from Citrifermentans bemidjiense (strain ATCC BAA-1014 / DSM 16622 / JCM 12645 / Bem) (Geobacter bemidjiensis).